The following is a 245-amino-acid chain: Ribonuclease PH (245 aa).

Phosphate-binding positions include Arg86 and 124-126 (GTR).

The protein belongs to the RNase PH family. Homohexameric ring arranged as a trimer of dimers.

It carries out the reaction tRNA(n+1) + phosphate = tRNA(n) + a ribonucleoside 5'-diphosphate. Its function is as follows. Phosphorolytic 3'-5' exoribonuclease that plays an important role in tRNA 3'-end maturation. Removes nucleotide residues following the 3'-CCA terminus of tRNAs; can also add nucleotides to the ends of RNA molecules by using nucleoside diphosphates as substrates, but this may not be physiologically important. Probably plays a role in initiation of 16S rRNA degradation (leading to ribosome degradation) during starvation. The protein is Ribonuclease PH of Bacillus anthracis (strain A0248).